Consider the following 421-residue polypeptide: D-amino acid dehydrogenase (421 aa).

3–17 lines the FAD pocket; it reads VIVLGSGVIGVASAY.

It belongs to the DadA oxidoreductase family. It depends on FAD as a cofactor.

The catalysed reaction is a D-alpha-amino acid + A + H2O = a 2-oxocarboxylate + AH2 + NH4(+). Its pathway is amino-acid degradation; D-alanine degradation; NH(3) and pyruvate from D-alanine: step 1/1. Its function is as follows. Oxidative deamination of D-amino acids. The chain is D-amino acid dehydrogenase from Acinetobacter baumannii (strain SDF).